Consider the following 482-residue polypeptide: Sensor histidine kinase CusS (482 aa).

At 1–15 (MVSKPFQRPFSLATR) the chain is on the cytoplasmic side. The chain crosses the membrane as a helical span at residues 16–36 (LTFFISLATIAAFFAFAWIMI). Topologically, residues 37–186 (HSVKVHFAEQ…LHYINDLMNK (150 aa)) are periplasmic. Residues 187–207 (LIMTASVISILIVFIVLLAVH) traverse the membrane as a helical segment. One can recognise an HAMP domain in the interval 207–260 (HKGHAPIRSVSRQIQNITSKDLDVRLDPQTVPIELEQLVLSFNHMIERIEDVFT). Residues 208 to 482 (KGHAPIRSVS…RFVIVLPERG (275 aa)) lie on the Cytoplasmic side of the membrane. One can recognise a Histidine kinase domain in the interval 268 to 482 (DIAHEIRTPI…RFVIVLPERG (215 aa)). H271 carries the phosphohistidine; by autocatalysis modification.

Autophosphorylated.

The protein resides in the cell inner membrane. The enzyme catalyses ATP + protein L-histidine = ADP + protein N-phospho-L-histidine.. Functionally, member of the two-component regulatory system CusS/CusR involved in response to copper and silver. Acts as a copper/silver ion sensor. Activates CusR by phosphorylation. The polypeptide is Sensor histidine kinase CusS (cusS) (Escherichia coli O157:H7).